The sequence spans 424 residues: Serine hydroxymethyltransferase 2 (424 aa).

Residues Leu125 and 129-131 contribute to the (6S)-5,6,7,8-tetrahydrofolate site; that span reads GHL. Lys234 carries the post-translational modification N6-(pyridoxal phosphate)lysine. Glu250 serves as a coordination point for (6S)-5,6,7,8-tetrahydrofolate.

Belongs to the SHMT family. In terms of assembly, homodimer. Pyridoxal 5'-phosphate is required as a cofactor.

It is found in the cytoplasm. The enzyme catalyses (6R)-5,10-methylene-5,6,7,8-tetrahydrofolate + glycine + H2O = (6S)-5,6,7,8-tetrahydrofolate + L-serine. It participates in one-carbon metabolism; tetrahydrofolate interconversion. It functions in the pathway amino-acid biosynthesis; glycine biosynthesis; glycine from L-serine: step 1/1. Its function is as follows. Catalyzes the reversible interconversion of serine and glycine with tetrahydrofolate (THF) serving as the one-carbon carrier. This reaction serves as the major source of one-carbon groups required for the biosynthesis of purines, thymidylate, methionine, and other important biomolecules. Also exhibits THF-independent aldolase activity toward beta-hydroxyamino acids, producing glycine and aldehydes, via a retro-aldol mechanism. This chain is Serine hydroxymethyltransferase 2, found in Burkholderia mallei (strain ATCC 23344).